The following is a 243-amino-acid chain: MRPSTRFLRSVTRTVPIGFRSTTVPFVSSTLRSSAATSNQFSARFSGVRFYADEAKKEEPKDENDAAAAEEDANLTEEQKKIKDLETKLDAKTKEASEFKDRLLRSVADFRNLQEVTKKDIQKAKDFALQKFAKDLLESVDNFGHALNAFKPETLEQSQELSDLYTGVKMTRDVFEKTLKKHGIEQLNPIGESFDPNKHEATFELPQPDKEPGTVFHVQQIGYTLNDRVIRPAKVGIVKDNEN.

Residues 56-79 are disordered; the sequence is KKEEPKDENDAAAAEEDANLTEEQ.

This sequence belongs to the GrpE family. In terms of assembly, component of the PAM complex, at least composed of mtHsp70, MGE1, TIM44, PAM16, PAM17 and PAM18.

It localises to the mitochondrion matrix. Essential component of the PAM complex, a complex required for the translocation of transit peptide-containing proteins from the inner membrane into the mitochondrial matrix in an ATP-dependent manner. Seems to control the nucleotide-dependent binding of SSC1 to substrate proteins. The chain is GrpE protein homolog, mitochondrial (mge1) from Kluyveromyces lactis (strain ATCC 8585 / CBS 2359 / DSM 70799 / NBRC 1267 / NRRL Y-1140 / WM37) (Yeast).